The following is a 459-amino-acid chain: tRNA modification GTPase MnmE (459 aa).

R23, E88, and R127 together coordinate (6S)-5-formyl-5,6,7,8-tetrahydrofolate. In terms of domain architecture, TrmE-type G spans 223 to 381; the sequence is GLNTVIIGKP…LKDTIENMFA (159 aa). N233 contacts K(+). GTP is bound by residues 233-238, 252-258, and 277-280; these read NVGKSS, TDIPGTT, and DTAG. S237 is a binding site for Mg(2+). K(+)-binding residues include T252, I254, and T257. T258 contributes to the Mg(2+) binding site. K459 serves as a coordination point for (6S)-5-formyl-5,6,7,8-tetrahydrofolate.

This sequence belongs to the TRAFAC class TrmE-Era-EngA-EngB-Septin-like GTPase superfamily. TrmE GTPase family. In terms of assembly, homodimer. Heterotetramer of two MnmE and two MnmG subunits. Requires K(+) as cofactor.

The protein resides in the cytoplasm. Its function is as follows. Exhibits a very high intrinsic GTPase hydrolysis rate. Involved in the addition of a carboxymethylaminomethyl (cmnm) group at the wobble position (U34) of certain tRNAs, forming tRNA-cmnm(5)s(2)U34. This Clostridium acetobutylicum (strain ATCC 824 / DSM 792 / JCM 1419 / IAM 19013 / LMG 5710 / NBRC 13948 / NRRL B-527 / VKM B-1787 / 2291 / W) protein is tRNA modification GTPase MnmE.